A 134-amino-acid chain; its full sequence is Phosphoribosyl-AMP cyclohydrolase (134 aa).

Position 80 (aspartate 80) interacts with Mg(2+). Cysteine 81 lines the Zn(2+) pocket. Mg(2+) is bound by residues aspartate 82 and aspartate 84. Zn(2+) is bound by residues cysteine 98 and cysteine 105.

This sequence belongs to the PRA-CH family. As to quaternary structure, homodimer. Requires Mg(2+) as cofactor. The cofactor is Zn(2+).

The protein resides in the cytoplasm. The enzyme catalyses 1-(5-phospho-beta-D-ribosyl)-5'-AMP + H2O = 1-(5-phospho-beta-D-ribosyl)-5-[(5-phospho-beta-D-ribosylamino)methylideneamino]imidazole-4-carboxamide. The protein operates within amino-acid biosynthesis; L-histidine biosynthesis; L-histidine from 5-phospho-alpha-D-ribose 1-diphosphate: step 3/9. Functionally, catalyzes the hydrolysis of the adenine ring of phosphoribosyl-AMP. In Bordetella avium (strain 197N), this protein is Phosphoribosyl-AMP cyclohydrolase.